Consider the following 496-residue polypeptide: Amino-acid acetyltransferase, mitochondrial (496 aa).

The N-acetyltransferase domain maps to 333–493; the sequence is YHGTDCLTNG…LDVIDSIQPT (161 aa).

The protein belongs to the acetyltransferase family.

Its subcellular location is the mitochondrion. The enzyme catalyses L-glutamate + acetyl-CoA = N-acetyl-L-glutamate + CoA + H(+). The protein operates within amino-acid biosynthesis; L-arginine biosynthesis; N(2)-acetyl-L-ornithine from L-glutamate: step 1/4. In terms of biological role, N-acetylglutamate synthase involved in arginine biosynthesis. The sequence is that of Amino-acid acetyltransferase, mitochondrial (arg2) from Schizosaccharomyces japonicus (strain yFS275 / FY16936) (Fission yeast).